The chain runs to 152 residues: Deoxyuridine 5'-triphosphate nucleotidohydrolase (152 aa).

Substrate contacts are provided by residues 71–73, Asn-84, 88–90, and Met-98; these read RSG and LID.

This sequence belongs to the dUTPase family. Mg(2+) is required as a cofactor.

It catalyses the reaction dUTP + H2O = dUMP + diphosphate + H(+). It participates in pyrimidine metabolism; dUMP biosynthesis; dUMP from dCTP (dUTP route): step 2/2. Its function is as follows. This enzyme is involved in nucleotide metabolism: it produces dUMP, the immediate precursor of thymidine nucleotides and it decreases the intracellular concentration of dUTP so that uracil cannot be incorporated into DNA. This Klebsiella pneumoniae (strain 342) protein is Deoxyuridine 5'-triphosphate nucleotidohydrolase.